The sequence spans 131 residues: Small ribosomal subunit protein uS11 (131 aa).

It belongs to the universal ribosomal protein uS11 family. In terms of assembly, part of the 30S ribosomal subunit. Interacts with proteins S7 and S18. Binds to IF-3.

Its function is as follows. Located on the platform of the 30S subunit, it bridges several disparate RNA helices of the 16S rRNA. Forms part of the Shine-Dalgarno cleft in the 70S ribosome. The chain is Small ribosomal subunit protein uS11 from Geobacter metallireducens (strain ATCC 53774 / DSM 7210 / GS-15).